A 411-amino-acid chain; its full sequence is Thyroid hormone receptor beta (411 aa).

Residues 1–24 (MTPNSMTENGLPAWDKPKPCPDGE) are disordered. Residues 1 to 104 (MTPNSMTENG…IPSYLDKDEL (104 aa)) are modulating. A compositionally biased stretch (basic and acidic residues) spans 15–24 (DKPKPCPDGE). The Zn(2+) site is built by Cys-105, Cys-108, Cys-122, Cys-125, Cys-143, Cys-149, Cys-159, and Cys-162. NR C4-type zinc fingers lie at residues 105 to 125 (CVVC…CEGC) and 143 to 167 (CKYE…FKKC). The segment at residues 105–179 (CVVCGDKATG…VGMATDLVLD (75 aa)) is a DNA-binding region (nuclear receptor). The region spanning 215-411 (QEWELIKTVT…EHYINYRRNS (197 aa)) is the NR LBD domain. The interaction with NR2F6 stretch occupies residues 242-411 (KFLPEDIGQA…EHYINYRRNS (170 aa)). 3,3',5-triiodo-L-thyronine contacts are provided by Arg-280 and Asn-329. The L-thyroxine site is built by Arg-280 and Asn-329.

It belongs to the nuclear hormone receptor family. NR1 subfamily. As to quaternary structure, binds DNA as a dimer; homodimer and heterodimer with RXRA. Interacts with the coactivators NCOA1/SRC1, NCOA2/GRIP1, NCOA7 and MED1/TRAP220 in a ligand-inducible manner. Interacts with the corepressor NCOR1 in absence of ligand. Interacts with C1D. Interacts with NR2F6; the interaction impairs the binding of the THRB homodimer and THRB:RXRB heterodimer to T3 response elements. Interacts with PRMT2 and THRSP. Interacts with TACC1; this interaction is decreased in the presence of thyroid hormone T3.

It is found in the nucleus. Nuclear hormone receptor that can act as a repressor or activator of transcription. High affinity receptor for thyroid hormones, including triiodothyronine and thyroxine. The sequence is that of Thyroid hormone receptor beta (THRB) from Ovis aries (Sheep).